The chain runs to 987 residues: Voltage-gated delayed rectifier potassium channel KCNH1 (987 aa).

Over 1 to 220 (MTMAGGRKGL…LHYCVFKTTW (220 aa)) the chain is Cytoplasmic. The 81-residue stretch at 14 to 94 (QNTFLENIVR…QTFENYEMNS (81 aa)) folds into the PAS domain. Residues 93–145 (NSFEILMYKKNRTPVWFFVKIAPIRNEQDKVVLFLCTFSDITAFKQPIEDDSC) form the PAC domain. Residues 151-162 (FARLTRALTSSR) are required for phosphatidylinositol bisphosphate binding. Residues 221–241 (DWIILILTFYTAILVPYNVSF) form a helical membrane-spanning segment. Residues 242-248 (KTRQNNV) are Extracellular-facing. The chain crosses the membrane as a helical span at residues 249-269 (AWLVVDSIVDVIFLVDIVLNF). The Cytoplasmic segment spans residues 270–290 (HTTFVGPAGEVISDPKLIRMN). The helical transmembrane segment at 291-309 (YLKTWFVIDLLSCLPYDVI) threads the bilayer. Over 310 to 345 (NAFENVDEVSAFMGDPGKIGFADQIPPPLEGRESQG) the chain is Extracellular. A helical; Voltage-sensor transmembrane segment spans residues 346-368 (ISSLFSSLKVVRLLRLGRVARKL). Topologically, residues 369-377 (DHYIEYGAA) are cytoplasmic. A helical membrane pass occupies residues 378–399 (VLVLLVCVFGLAAHWMACIWYS). The Extracellular portion of the chain corresponds to 400-448 (IGDYEIFDEDTKTIRNNSWLYQLAMDIGTPYQFNGSGSGKWEGGPSKNS). 2 N-linked (GlcNAc...) asparagine glycosylation sites follow: asparagine 415 and asparagine 433. Positions 449–470 (VYISSLYFTMTSLTSVGFGNIA) form an intramembrane region, pore-forming. The Selectivity filter motif lies at 463–468 (SVGFGN). The Extracellular segment spans residues 471 to 477 (PSTDIEK). A helical transmembrane segment spans residues 478-498 (IFAVAIMMIGSLLYATIFGNV). The Cytoplasmic portion of the chain corresponds to 499 to 987 (TTIFQQMYAN…ESERDIFGAS (489 aa)). Residues 673–770 (KRDALQKVLE…LDDLDVEKGS (98 aa)) are calmodulin-binding. Residues 699–701 (YNL) form an interaction with cyclic nucleotide-binding pocket region. Residues 922–962 (AAVLEVKHELKEDIKALSTKMTSIEKQLSEILRILTSRRSS) form a CAD (involved in subunit assembly) region. The disordered stretch occupies residues 960–987 (RSSQSPQELFEISRPQSPESERDIFGAS). A phosphoserine mark is found at serine 972, serine 976, and serine 979. The span at 978–987 (ESERDIFGAS) shows a compositional bias: basic and acidic residues.

It belongs to the potassium channel family. H (Eag) (TC 1.A.1.20) subfamily. Kv10.1/KCNH1 sub-subfamily. As to quaternary structure, homomultimer. The potassium channel is composed of a homo- or heterotetrameric complex of pore-forming alpha subunits that can associate with modulating beta subunits. Heteromultimer with KCNH5/EAG2. Interacts with ALG10B. Interacts with RABEP1. Interacts (via C-terminus) with CTTN. Interacts (via C-terminal cytoplasmic region) with Ca(2+)-bound calmodulin. Channel activity is regulated via tyrosine phosphorylation/dephosphorylation by SRC and PTPN6. Detected in cerebellum, cortex and retina.

Its subcellular location is the cell membrane. The protein resides in the nucleus inner membrane. It localises to the cell projection. The protein localises to the dendrite. It is found in the axon. Its subcellular location is the presynaptic cell membrane. The protein resides in the perikaryon. It localises to the postsynaptic density membrane. The protein localises to the early endosome membrane. It catalyses the reaction K(+)(in) = K(+)(out). Its activity is regulated as follows. Channel activity is inhibited by interaction with Ca(2+)-bound calmodulin. Interaction of a single pore-forming alpha subunit with a calmodulin chain is sufficient to promote channel closure. Extracellular magnesium ion concentrations up to 4 mM modulate channel activity by slowing down current activation in a reversible fashion. Channel activity is not regulated by cyclic nucleotides. Channel activity is inhibited by binding intracellular phosphatidylinositol-3,5-bisphosphate and phosphatidylinositol-4,5-bisphosphate (PIP2), but is not inhibited by phosphatidylinositol 4-phosphate. Functionally, pore-forming (alpha) subunit of a voltage-gated delayed rectifier potassium channel that mediates outward-rectifying potassium currents which, on depolarization, reaches a steady-state level and do not inactivate. The activation kinetics depend on the prepulse potential and external divalent cation concentration. With negative prepulses, the current activation is delayed and slowed down several fold, whereas more positive prepulses speed up activation. The time course of activation is biphasic with a fast and a slowly activating current component. Activates at more positive membrane potentials and exhibit a steeper activation curve. Channel properties are modulated by subunit assembly. Mediates IK(NI) current in myoblasts. Involved in the regulation of cell proliferation and differentiation, in particular adipogenic and osteogenic differentiation in bone marrow-derived mesenchymal stem cells (MSCs). In Bos taurus (Bovine), this protein is Voltage-gated delayed rectifier potassium channel KCNH1.